A 651-amino-acid polypeptide reads, in one-letter code: 120 kDa Glycoprotein O (651 aa).

The signal sequence occupies residues methionine 1–leucine 56. 7 N-linked (GlcNAc...) asparagine; by host glycosylation sites follow: asparagine 74, asparagine 97, asparagine 147, asparagine 208, asparagine 223, asparagine 234, and asparagine 254. A compositionally biased stretch (low complexity) spans serine 275–proline 292. Residues serine 275 to serine 303 are disordered. N-linked (GlcNAc...) asparagine; by host glycosylation is found at asparagine 302, asparagine 355, asparagine 378, asparagine 395, asparagine 469, asparagine 502, asparagine 520, asparagine 546, asparagine 603, asparagine 620, and asparagine 631.

It belongs to the herpesviridae U47 family. Part of a gH-gL-gO complex. A shorter mature protein, gO-80K, is produced probably by proteolytic cleavage. In terms of processing, modified with high mannose-oligosaccharides. Post-translationally, N-glycosylated with complex glycans.

The protein localises to the virion. It localises to the host cell membrane. The chain is 120 kDa Glycoprotein O (U47) from Homo sapiens (Human).